The primary structure comprises 328 residues: Serine protease 48 (328 aa).

The signal sequence occupies residues 1 to 20 (MGPAGCAFTLLLLLGISVCG). Residues 28–267 (VVGGQDAAAG…YQKWINATIS (240 aa)) form the Peptidase S1 domain. Cys-53 and Cys-69 are disulfide-bonded. Residues His-68 and Asp-114 each act as charge relay system in the active site. Cystine bridges form between Cys-148–Cys-226, Cys-181–Cys-205, and Cys-216–Cys-244. Ser-220 (charge relay system) is an active-site residue. A glycan (N-linked (GlcNAc...) asparagine) is linked at Asn-263.

It belongs to the peptidase S1 family.

The protein localises to the secreted. The chain is Serine protease 48 (PRSS48) from Homo sapiens (Human).